We begin with the raw amino-acid sequence, 239 residues long: Mitochondrial fission factor homolog B (239 aa).

At 1–219 (MAEINRMQYE…ENKERVKHEM (219 aa)) the chain is on the cytoplasmic side. The tract at residues 107–139 (EGPAPATPHSKEVRSSGHLKRDGLASENSLRQN) is disordered. A compositionally biased stretch (basic and acidic residues) spans 115-130 (HSKEVRSSGHLKRDGL). A coiled-coil region spans residues 184–214 (DLALADAASLRRQIIKLNRRLLLLEEENKER). The helical; Anchor for type IV membrane protein transmembrane segment at 220 to 237 (TMYSIIIIFGLLNSWLWF) threads the bilayer. Over 238–239 (RR) the chain is Extracellular.

This sequence belongs to the Tango11 family.

Its subcellular location is the mitochondrion outer membrane. The protein localises to the peroxisome. Functionally, plays a role in mitochondrial and peroxisomal fission. Promotes the recruitment and association of the fission mediator dynamin-related protein 1 (DNM1L) to the mitochondrial surface. This Xenopus laevis (African clawed frog) protein is Mitochondrial fission factor homolog B (mff-b).